A 738-amino-acid chain; its full sequence is Glycogen [starch] synthase, muscle (738 aa).

A Phosphoserine; by AMPK and PKA modification is found at S8. Position 11 is a phosphoserine (S11). Residue K39 participates in UDP binding. Residues H205 and R211 each contribute to the UDP-alpha-D-glucose site. Residues H291, E292, Q294, H297, and K301 each contribute to the alpha-D-glucose 6-phosphate site. R331 provides a ligand contact to UDP. R331 contacts UDP-alpha-D-glucose. The residue at position 412 (S412) is a Phosphoserine. H501 provides a ligand contact to alpha-D-glucose 6-phosphate. Positions 510, 512, and 513 each coordinate UDP-alpha-D-glucose. Residue T515 coordinates UDP. The alpha-D-glucose 6-phosphate site is built by R582 and R586. Residues 632 to 738 are disordered; the sequence is QGYRYPRPAS…PTSSLGEERN (107 aa). Phosphoserine occurs at positions 641 and 645. At S649 the chain carries Phosphoserine; by GSK3-alpha and GSK3-beta. Phosphoserine is present on residues S652, S653, S657, and S672. A compositionally biased stretch (basic and acidic residues) spans 682–695; the sequence is AKDRRNIRAPEWPR. Phosphoserine is present on residues S698, S709, and S711. The segment covering 698–738 has biased composition (low complexity); sequence SCSSSTGGSKRSNSVDTGPSSSLSTPTEPLSPTSSLGEERN. T722 carries the phosphothreonine modification. Phosphoserine is present on residues S728 and S732.

Belongs to the glycosyltransferase 3 family. Part of the GYS1-GYG1 complex, a heterooctamer composed of a tetramer of GYS1 and 2 dimers of GYG1, where each GYS1 protomer binds to one GYG1 subunit (via GYG1 C-terminus); the GYS1 tetramer may dissociate from GYG1 dimers to continue glycogen polymerization on its own. In terms of processing, phosphorylation at Ser-8 by AMPK inactivates the enzyme activity. Primed phosphorylation at Ser-657 (site 5) by CSNK2A1 and CSNK2A2 is required for inhibitory phosphorylation at Ser-641 (site 3a), Ser-645 (site 3b), Ser-649 (site 3c) and Ser-653 (site 4) by GSK3A an GSK3B. Phosphorylated at Ser-641 by PASK, leading to inactivation; phosphorylation by PASK is inhibited by glycogen. Phosphorylated at Ser-641 by DYRK2, leading to inactivation. Dephosphorylation at Ser-641 and Ser-645 by PP1 activates the enzyme.

The catalysed reaction is [(1-&gt;4)-alpha-D-glucosyl](n) + UDP-alpha-D-glucose = [(1-&gt;4)-alpha-D-glucosyl](n+1) + UDP + H(+). It participates in glycan biosynthesis; glycogen biosynthesis. Its activity is regulated as follows. Allosteric activation by glucose-6-phosphate. Phosphorylation reduces the activity towards UDP-glucose. When in the non-phosphorylated state, glycogen synthase does not require glucose-6-phosphate as an allosteric activator; when phosphorylated it does. Glycogen synthase participates in the glycogen biosynthetic process along with glycogenin and glycogen branching enzyme. Extends the primer composed of a few glucose units formed by glycogenin by adding new glucose units to it. In this context, glycogen synthase transfers the glycosyl residue from UDP-Glc to the non-reducing end of alpha-1,4-glucan. This chain is Glycogen [starch] synthase, muscle (Gys1), found in Rattus norvegicus (Rat).